Here is a 4485-residue protein sequence, read N- to C-terminus: Dynein gamma chain, flagellar outer arm (4485 aa).

A stem region spans residues 1–1780; sequence MALDNRHRLI…IISICDVDFE (1780 aa). Coiled-coil stretches lie at residues 449–469, 804–838, 1093–1114, 1275–1297, and 1699–1727; these read IEGLDTMLKSLNNIIDDVKRK, VEQNRFQKKQAELLAIRNEEVRRAIEDLYTLVRNY, VRNVMAVLKEVREKESEIDNLI, DVVEKIDEMGEQVQQYQNQSKKL, and KKVDALLRDMVNITVRLDLTKNQRTNLET. 4 AAA regions span residues 1781–2002, 2061–2279, 2384–2638, and 2763–3013; these read YSFE…VLRT, KDAE…ISLK, TYPK…VFQG, and KFNE…YRRY. ATP is bound by residues 1819–1826, 2099–2106, 2425–2432, and 2802–2809; these read GPAGTGKT, GPSGSGKS, GGPGTAKT, and GVGGSGKQ. 4 coiled-coil regions span residues 3077-3099, 3196-3227, 3265-3343, and 3569-3663; these read AKEAEALLKQISESTAIAEKEKQ, EAQKMMNQMSFLQDLKDFAKEQINDETVELLE, KVVE…LAGE, and EDQL…EEYR. Residues 3077–3343 are stalk; that stretch reads AKEAEALLKQ…NALIGALAGE (267 aa). AAA regions lie at residues 3412–3643 and 3857–4071; these read LVDD…DVSE and AADY…FLQN.

This sequence belongs to the dynein heavy chain family. Consists of at least 3 heavy chains (alpha, beta and gamma), 2 intermediate chains and 8 light chains.

It localises to the cell projection. The protein resides in the cilium. Its subcellular location is the flagellum. It is found in the cytoplasm. The protein localises to the cytoskeleton. It localises to the flagellum axoneme. In terms of biological role, force generating protein of eukaryotic cilia and flagella. Produces force towards the minus ends of microtubules. Dynein has ATPase activity; the force-producing power stroke is thought to occur on release of ADP. This chain is Dynein gamma chain, flagellar outer arm (ODA2), found in Chlamydomonas reinhardtii (Chlamydomonas smithii).